A 280-amino-acid polypeptide reads, in one-letter code: MKKTALTIITIASGSLGAVYFLPSEPAVQKDIRATSQHDTSVDNTSPKAFLDYSLSTLGEKPWQTITQDVVSEERALGELQLDEQLFALYLRYKQALADLDIEITGSDITSLETLHQAILDLQREYFSAQQIDLIFGEENQLRALALEKARLSEQGYSAEEQKQLWRDHLALQPEYVQESDANRRLMSELAQGEDAQTTYLKRVELVGEAGAQRLEVLDQNRAEFDRVFQHYLVQRSAILDDLGLSDEQKRQQIKMLRETSFDAKQWRRIEALERIADGG.

The helical transmembrane segment at 5 to 22 (ALTIITIASGSLGAVYFL) threads the bilayer.

Belongs to the lipase chaperone family.

The protein resides in the cell inner membrane. Its function is as follows. May be involved in the folding of the extracellular lipase during its passage through the periplasm. The chain is Lipase chaperone (lifO) from Vibrio vulnificus (strain YJ016).